A 361-amino-acid polypeptide reads, in one-letter code: Peptide chain release factor 1 (361 aa).

Position 235 is an N5-methylglutamine (Q235).

Belongs to the prokaryotic/mitochondrial release factor family. Methylated by PrmC. Methylation increases the termination efficiency of RF1.

It localises to the cytoplasm. Functionally, peptide chain release factor 1 directs the termination of translation in response to the peptide chain termination codons UAG and UAA. The sequence is that of Peptide chain release factor 1 from Chlamydia abortus (strain DSM 27085 / S26/3) (Chlamydophila abortus).